Reading from the N-terminus, the 81-residue chain is Photosystem I iron-sulfur center (81 aa).

4Fe-4S ferredoxin-type domains are found at residues 2–31 and 39–68; these read SHTV…MAPW and VASA…VRVY. [4Fe-4S] cluster-binding residues include Cys11, Cys14, Cys17, Cys21, Cys48, Cys51, Cys54, and Cys58.

The eukaryotic PSI reaction center is composed of at least 11 subunits. It depends on [4Fe-4S] cluster as a cofactor.

The protein resides in the plastid. Its subcellular location is the chloroplast thylakoid membrane. It carries out the reaction reduced [plastocyanin] + hnu + oxidized [2Fe-2S]-[ferredoxin] = oxidized [plastocyanin] + reduced [2Fe-2S]-[ferredoxin]. Its function is as follows. Apoprotein for the two 4Fe-4S centers FA and FB of photosystem I (PSI); essential for photochemical activity. FB is the terminal electron acceptor of PSI, donating electrons to ferredoxin. The C-terminus interacts with PsaA/B/D and helps assemble the protein into the PSI complex. Required for binding of PsaD and PsaE to PSI. PSI is a plastocyanin/cytochrome c6-ferredoxin oxidoreductase, converting photonic excitation into a charge separation, which transfers an electron from the donor P700 chlorophyll pair to the spectroscopically characterized acceptors A0, A1, FX, FA and FB in turn. The chain is Photosystem I iron-sulfur center from Tupiella akineta (Green alga).